Consider the following 613-residue polypeptide: Dihydroxy-acid dehydratase (613 aa).

Residue D81 participates in Mg(2+) binding. C122 contacts [2Fe-2S] cluster. Residues D123 and K124 each coordinate Mg(2+). At K124 the chain carries N6-carboxylysine. C195 is a binding site for [2Fe-2S] cluster. Residue E491 participates in Mg(2+) binding. Catalysis depends on S517, which acts as the Proton acceptor.

Belongs to the IlvD/Edd family. Homodimer. Requires [2Fe-2S] cluster as cofactor. It depends on Mg(2+) as a cofactor.

It carries out the reaction (2R)-2,3-dihydroxy-3-methylbutanoate = 3-methyl-2-oxobutanoate + H2O. The enzyme catalyses (2R,3R)-2,3-dihydroxy-3-methylpentanoate = (S)-3-methyl-2-oxopentanoate + H2O. The protein operates within amino-acid biosynthesis; L-isoleucine biosynthesis; L-isoleucine from 2-oxobutanoate: step 3/4. It participates in amino-acid biosynthesis; L-valine biosynthesis; L-valine from pyruvate: step 3/4. Functionally, functions in the biosynthesis of branched-chain amino acids. Catalyzes the dehydration of (2R,3R)-2,3-dihydroxy-3-methylpentanoate (2,3-dihydroxy-3-methylvalerate) into 2-oxo-3-methylpentanoate (2-oxo-3-methylvalerate) and of (2R)-2,3-dihydroxy-3-methylbutanoate (2,3-dihydroxyisovalerate) into 2-oxo-3-methylbutanoate (2-oxoisovalerate), the penultimate precursor to L-isoleucine and L-valine, respectively. This is Dihydroxy-acid dehydratase from Aliivibrio fischeri (strain ATCC 700601 / ES114) (Vibrio fischeri).